Here is a 602-residue protein sequence, read N- to C-terminus: Aspartate--tRNA(Asp/Asn) ligase (602 aa).

E175 provides a ligand contact to L-aspartate. The aspartate stretch occupies residues 199–202; the sequence is QIFK. L-aspartate is bound at residue R221. ATP is bound by residues 221 to 223 and Q230; that span reads RDE. Residue H458 coordinates L-aspartate. E492 lines the ATP pocket. Residue R499 coordinates L-aspartate. Residue 544–547 coordinates ATP; sequence GLDR.

It belongs to the class-II aminoacyl-tRNA synthetase family. Type 1 subfamily. As to quaternary structure, homodimer.

The protein localises to the cytoplasm. The enzyme catalyses tRNA(Asx) + L-aspartate + ATP = L-aspartyl-tRNA(Asx) + AMP + diphosphate. In terms of biological role, aspartyl-tRNA synthetase with relaxed tRNA specificity since it is able to aspartylate not only its cognate tRNA(Asp) but also tRNA(Asn). Reaction proceeds in two steps: L-aspartate is first activated by ATP to form Asp-AMP and then transferred to the acceptor end of tRNA(Asp/Asn). In Cupriavidus pinatubonensis (strain JMP 134 / LMG 1197) (Cupriavidus necator (strain JMP 134)), this protein is Aspartate--tRNA(Asp/Asn) ligase.